Consider the following 146-residue polypeptide: Hemoglobin subunit beta-1 (146 aa).

The region spanning 2 to 146 (EWSSNERSTI…VISALSRQYF (145 aa)) is the Globin domain. Residues H63 and H92 each contribute to the heme b site.

It belongs to the globin family. As to quaternary structure, heterotetramer of two alpha chains and two beta chains. Red blood cells.

In terms of biological role, involved in oxygen transport from gills to the various peripheral tissues. The polypeptide is Hemoglobin subunit beta-1 (hbb1) (Muraena helena (Mediterranean moray)).